We begin with the raw amino-acid sequence, 400 residues long: Nicotinate phosphoribosyltransferase (400 aa).

Residue His220 is modified to Phosphohistidine; by autocatalysis.

The protein belongs to the NAPRTase family. Post-translationally, transiently phosphorylated on a His residue during the reaction cycle. Phosphorylation strongly increases the affinity for substrates and increases the rate of nicotinate D-ribonucleotide production. Dephosphorylation regenerates the low-affinity form of the enzyme, leading to product release.

It carries out the reaction nicotinate + 5-phospho-alpha-D-ribose 1-diphosphate + ATP + H2O = nicotinate beta-D-ribonucleotide + ADP + phosphate + diphosphate. It functions in the pathway cofactor biosynthesis; NAD(+) biosynthesis; nicotinate D-ribonucleotide from nicotinate: step 1/1. Its function is as follows. Catalyzes the synthesis of beta-nicotinate D-ribonucleotide from nicotinate and 5-phospho-D-ribose 1-phosphate at the expense of ATP. The protein is Nicotinate phosphoribosyltransferase of Salmonella choleraesuis (strain SC-B67).